We begin with the raw amino-acid sequence, 237 residues long: Pyridoxine 5'-phosphate synthase (237 aa).

The 3-amino-2-oxopropyl phosphate site is built by N7 and R18. Residue H43 is the Proton acceptor of the active site. R45 and H50 together coordinate 1-deoxy-D-xylulose 5-phosphate. Residue E70 is the Proton acceptor of the active site. T100 provides a ligand contact to 1-deoxy-D-xylulose 5-phosphate. Catalysis depends on H190, which acts as the Proton donor. 3-amino-2-oxopropyl phosphate is bound by residues D191 and 213–214; that span reads GH.

Belongs to the PNP synthase family. As to quaternary structure, homooctamer; tetramer of dimers.

It localises to the cytoplasm. It carries out the reaction 3-amino-2-oxopropyl phosphate + 1-deoxy-D-xylulose 5-phosphate = pyridoxine 5'-phosphate + phosphate + 2 H2O + H(+). Its pathway is cofactor biosynthesis; pyridoxine 5'-phosphate biosynthesis; pyridoxine 5'-phosphate from D-erythrose 4-phosphate: step 5/5. In terms of biological role, catalyzes the complicated ring closure reaction between the two acyclic compounds 1-deoxy-D-xylulose-5-phosphate (DXP) and 3-amino-2-oxopropyl phosphate (1-amino-acetone-3-phosphate or AAP) to form pyridoxine 5'-phosphate (PNP) and inorganic phosphate. The chain is Pyridoxine 5'-phosphate synthase from Bacteroides thetaiotaomicron (strain ATCC 29148 / DSM 2079 / JCM 5827 / CCUG 10774 / NCTC 10582 / VPI-5482 / E50).